Reading from the N-terminus, the 217-residue chain is Dephospho-CoA kinase (217 aa).

The DPCK domain occupies 2–217 (VIGLTGGIAS…RELARIEEQK (216 aa)). Position 10-15 (10-15 (ASGKST)) interacts with ATP.

The protein belongs to the CoaE family.

Its subcellular location is the cytoplasm. It carries out the reaction 3'-dephospho-CoA + ATP = ADP + CoA + H(+). The protein operates within cofactor biosynthesis; coenzyme A biosynthesis; CoA from (R)-pantothenate: step 5/5. Its function is as follows. Catalyzes the phosphorylation of the 3'-hydroxyl group of dephosphocoenzyme A to form coenzyme A. This is Dephospho-CoA kinase from Lactococcus lactis subsp. lactis (strain IL1403) (Streptococcus lactis).